The primary structure comprises 333 residues: Phosphate acyltransferase (333 aa).

Belongs to the PlsX family. Homodimer. Probably interacts with PlsY.

It is found in the cytoplasm. The enzyme catalyses a fatty acyl-[ACP] + phosphate = an acyl phosphate + holo-[ACP]. It functions in the pathway lipid metabolism; phospholipid metabolism. Its function is as follows. Catalyzes the reversible formation of acyl-phosphate (acyl-PO(4)) from acyl-[acyl-carrier-protein] (acyl-ACP). This enzyme utilizes acyl-ACP as fatty acyl donor, but not acyl-CoA. This chain is Phosphate acyltransferase, found in Clostridium beijerinckii (strain ATCC 51743 / NCIMB 8052) (Clostridium acetobutylicum).